We begin with the raw amino-acid sequence, 471 residues long: ATP synthase subunit beta (471 aa).

An ATP-binding site is contributed by 159–166 (GGAGVGKT).

Belongs to the ATPase alpha/beta chains family. In terms of assembly, F-type ATPases have 2 components, CF(1) - the catalytic core - and CF(0) - the membrane proton channel. CF(1) has five subunits: alpha(3), beta(3), gamma(1), delta(1), epsilon(1). CF(0) has four main subunits: a(1), b(1), b'(1) and c(9-12).

It localises to the cell membrane. It carries out the reaction ATP + H2O + 4 H(+)(in) = ADP + phosphate + 5 H(+)(out). In terms of biological role, produces ATP from ADP in the presence of a proton gradient across the membrane. The catalytic sites are hosted primarily by the beta subunits. The polypeptide is ATP synthase subunit beta (Heliobacterium modesticaldum (strain ATCC 51547 / Ice1)).